The sequence spans 366 residues: MWPRSHRHLCLAFLLVCVLSAISFLIHFHQDSIRHGLGLSVLCPDRRLVTPPVAIFCLPGTPMSPNTSSPCPQHPASLSGTWTIYPDGRFGNQMGQYATLLALAQLNGRRAFILPAMHAALAPVFRITLPVLAPEVDSRTPWQELRLHDWMSEEYADLGDPFLKLSGFPCSWTFFHHLREQIRSEFTLHDHLREEAQSVLRRLRLGRSGARPRTFVGVHVRRGDYLQVMPQRWKGVVANSAYLREAMDWFRARHEAPVFVVTSNGMEWCRENIDASKGDVMFAGDGQEASPWKDFALLAQCNHTIMTIGTFGFWAAYLAGGDTVYLANFTLPDSEFLKIFKPEAAFLPEWVGINADLSPLWPLAEP.

The Cytoplasmic portion of the chain corresponds to 1 to 8 (MWPRSHRH). The helical; Signal-anchor for type II membrane protein transmembrane segment at 9–25 (LCLAFLLVCVLSAISFL) threads the bilayer. Residues 26-366 (IHFHQDSIRH…LSPLWPLAEP (341 aa)) are Lumenal-facing. N-linked (GlcNAc...) asparagine glycosylation is found at N66, N302, and N328.

Belongs to the glycosyltransferase 11 family.

Its subcellular location is the golgi apparatus. It is found in the golgi stack membrane. It catalyses the reaction a beta-D-galactosyl-(1-&gt;4)-N-acetyl-beta-D-glucosaminyl derivative + GDP-beta-L-fucose = an alpha-L-Fuc-(1-&gt;2)-beta-D-Gal-(1-&gt;4)-beta-D-GlcNAc derivative + GDP + H(+). The catalysed reaction is a ganglioside GA1 + GDP-beta-L-fucose = a ganglioside Fuc-GA1 + GDP + H(+). The enzyme catalyses a beta-D-Gal-(1-&gt;3)-beta-D-GlcNAc-(1-&gt;3)-beta-D-Gal-(1-&gt;4)-beta-D-Glc-(1&lt;-&gt;1')-Cer(d18:1(4E)) + GDP-beta-L-fucose = alpha-L-fucosyl-(1-&gt;2)- beta-D-galactosyl-(1-&gt;3)-N-acetyl-beta-D-glucosaminyl-(1-&gt;3)-beta-D-galactosyl-(1-&gt;4)-beta-D-glucosyl-(1&lt;-&gt;1')-N-acylsphing-4-enine + GDP + H(+). It carries out the reaction a neolactoside nLc4Cer(d18:1(4E)) + GDP-beta-L-fucose = a neolactoside IV(2)-alpha-Fuc-nLc4Cer(d18:1(4E)) + GDP + H(+). It catalyses the reaction a ganglioside GM1 + GDP-beta-L-fucose = a ganglioside Fuc-GM1 + GDP + H(+). The catalysed reaction is beta-D-galactosyl-(1-&gt;3)-N-acetyl-D-galactosamine + GDP-beta-L-fucose = alpha-L-fucosyl-(1-&gt;2)-beta-D-galactosyl-(1-&gt;3)-N-acetyl-D-galactosamine + GDP + H(+). Its pathway is protein modification; protein glycosylation. In terms of biological role, catalyzes the transfer of L-fucose, from a guanosine diphosphate-beta-L-fucose, to the terminal galactose residue of glycoconjugates through an alpha(1,2) linkage leading to H antigen synthesis that is an intermediate substrate in the synthesis of ABO blood group antigens. H antigen is essential for maturation of the glomerular layer of the main olfactory bulb, in cell migration and early cell-cell contacts during tumor associated angiogenesis. Preferentially fucosylates soluble lactose and to a lesser extent fucosylates glycolipids gangliosides GA1 and GM1a. The chain is Galactoside alpha-(1,2)-fucosyltransferase 1 from Saimiri sciureus (Common squirrel monkey).